A 412-amino-acid polypeptide reads, in one-letter code: Multifunctional CCA protein (412 aa).

2 residues coordinate ATP: G8 and R11. The CTP site is built by G8 and R11. Positions 21 and 23 each coordinate Mg(2+). Residues R91, R137, and R140 each contribute to the ATP site. Positions 91, 137, and 140 each coordinate CTP. Positions T228–W329 constitute an HD domain.

Belongs to the tRNA nucleotidyltransferase/poly(A) polymerase family. Bacterial CCA-adding enzyme type 1 subfamily. In terms of assembly, monomer. Can also form homodimers and oligomers. The cofactor is Mg(2+). Requires Ni(2+) as cofactor.

It carries out the reaction a tRNA precursor + 2 CTP + ATP = a tRNA with a 3' CCA end + 3 diphosphate. The enzyme catalyses a tRNA with a 3' CCA end + 2 CTP + ATP = a tRNA with a 3' CCACCA end + 3 diphosphate. In terms of biological role, catalyzes the addition and repair of the essential 3'-terminal CCA sequence in tRNAs without using a nucleic acid template. Adds these three nucleotides in the order of C, C, and A to the tRNA nucleotide-73, using CTP and ATP as substrates and producing inorganic pyrophosphate. tRNA 3'-terminal CCA addition is required both for tRNA processing and repair. Also involved in tRNA surveillance by mediating tandem CCA addition to generate a CCACCA at the 3' terminus of unstable tRNAs. While stable tRNAs receive only 3'-terminal CCA, unstable tRNAs are marked with CCACCA and rapidly degraded. This chain is Multifunctional CCA protein, found in Shigella dysenteriae serotype 1 (strain Sd197).